The primary structure comprises 424 residues: Serine hydroxymethyltransferase (424 aa).

Residues Leu-119 and 123–125 (GHL) contribute to the (6S)-5,6,7,8-tetrahydrofolate site. The residue at position 228 (Lys-228) is an N6-(pyridoxal phosphate)lysine. 353 to 355 (SAF) contributes to the (6S)-5,6,7,8-tetrahydrofolate binding site.

Belongs to the SHMT family. As to quaternary structure, homodimer. The cofactor is pyridoxal 5'-phosphate.

The protein localises to the cytoplasm. The enzyme catalyses (6R)-5,10-methylene-5,6,7,8-tetrahydrofolate + glycine + H2O = (6S)-5,6,7,8-tetrahydrofolate + L-serine. Its pathway is one-carbon metabolism; tetrahydrofolate interconversion. It participates in amino-acid biosynthesis; glycine biosynthesis; glycine from L-serine: step 1/1. Its function is as follows. Catalyzes the reversible interconversion of serine and glycine with tetrahydrofolate (THF) serving as the one-carbon carrier. Also exhibits THF-independent aldolase activity toward beta-hydroxyamino acids, producing glycine and aldehydes, via a retro-aldol mechanism. This is Serine hydroxymethyltransferase from Natronomonas pharaonis (strain ATCC 35678 / DSM 2160 / CIP 103997 / JCM 8858 / NBRC 14720 / NCIMB 2260 / Gabara) (Halobacterium pharaonis).